The primary structure comprises 147 residues: Hemoglobin subunit beta (147 aa).

Residues 3-147 (NWTKTEKATI…VMSALGKQYH (145 aa)) form the Globin domain. Heme b is bound by residues His64 and His93.

It belongs to the globin family. Heterotetramer of two alpha chains and two beta chains. As to expression, red blood cells.

Its function is as follows. Involved in oxygen transport from gills to the various peripheral tissues. This chain is Hemoglobin subunit beta (hbb), found in Gymnodraco acuticeps (Antarctic dragonfish).